A 486-amino-acid chain; its full sequence is Glutamate--tRNA ligase (486 aa).

The 'HIGH' region signature appears at 11 to 21; sequence PSPTGVVHIGN. Positions 255 to 259 match the 'KMSKS' region motif; it reads KLSKR. K258 serves as a coordination point for ATP.

The protein belongs to the class-I aminoacyl-tRNA synthetase family. Glutamate--tRNA ligase type 1 subfamily. Monomer.

It localises to the cytoplasm. The enzyme catalyses tRNA(Glu) + L-glutamate + ATP = L-glutamyl-tRNA(Glu) + AMP + diphosphate. In terms of biological role, catalyzes the attachment of glutamate to tRNA(Glu) in a two-step reaction: glutamate is first activated by ATP to form Glu-AMP and then transferred to the acceptor end of tRNA(Glu). The chain is Glutamate--tRNA ligase from Streptococcus pneumoniae (strain CGSP14).